Consider the following 504-residue polypeptide: Glycerol kinase (504 aa).

Thr14 contributes to the ADP binding site. Positions 14, 15, and 16 each coordinate ATP. Thr14 is a sn-glycerol 3-phosphate binding site. Arg18 serves as a coordination point for ADP. Sn-glycerol 3-phosphate contacts are provided by Arg84, Glu85, Tyr136, and Asp246. Residues Arg84, Glu85, Tyr136, Asp246, and Gln247 each coordinate glycerol. ADP contacts are provided by Thr268 and Gly311. 4 residues coordinate ATP: Thr268, Gly311, Gln315, and Gly412. Residues Gly412 and Asn416 each contribute to the ADP site.

The protein belongs to the FGGY kinase family.

It catalyses the reaction glycerol + ATP = sn-glycerol 3-phosphate + ADP + H(+). Its pathway is polyol metabolism; glycerol degradation via glycerol kinase pathway; sn-glycerol 3-phosphate from glycerol: step 1/1. With respect to regulation, inhibited by fructose 1,6-bisphosphate (FBP). Functionally, key enzyme in the regulation of glycerol uptake and metabolism. Catalyzes the phosphorylation of glycerol to yield sn-glycerol 3-phosphate. This chain is Glycerol kinase, found in Aliivibrio fischeri (strain MJ11) (Vibrio fischeri).